The primary structure comprises 129 residues: Ribonuclease P protein component (129 aa).

It belongs to the RnpA family. Consists of a catalytic RNA component (M1 or rnpB) and a protein subunit.

It catalyses the reaction Endonucleolytic cleavage of RNA, removing 5'-extranucleotides from tRNA precursor.. Its function is as follows. RNaseP catalyzes the removal of the 5'-leader sequence from pre-tRNA to produce the mature 5'-terminus. It can also cleave other RNA substrates such as 4.5S RNA. The protein component plays an auxiliary but essential role in vivo by binding to the 5'-leader sequence and broadening the substrate specificity of the ribozyme. The polypeptide is Ribonuclease P protein component (Corynebacterium jeikeium (strain K411)).